Reading from the N-terminus, the 139-residue chain is Large ribosomal subunit protein bL17 (139 aa).

The protein belongs to the bacterial ribosomal protein bL17 family. As to quaternary structure, part of the 50S ribosomal subunit. Contacts protein L32.

The protein is Large ribosomal subunit protein bL17 of Cereibacter sphaeroides (strain ATCC 17025 / ATH 2.4.3) (Rhodobacter sphaeroides).